Here is a 348-residue protein sequence, read N- to C-terminus: tRNA N6-adenosine threonylcarbamoyltransferase (348 aa).

The Fe cation site is built by His-115 and His-119. Substrate-binding positions include 138–142 (LVSGG), Asp-171, Gly-184, and Asn-276. Fe cation is bound at residue Asp-304.

This sequence belongs to the KAE1 / TsaD family. It depends on Fe(2+) as a cofactor.

Its subcellular location is the cytoplasm. It carries out the reaction L-threonylcarbamoyladenylate + adenosine(37) in tRNA = N(6)-L-threonylcarbamoyladenosine(37) in tRNA + AMP + H(+). Required for the formation of a threonylcarbamoyl group on adenosine at position 37 (t(6)A37) in tRNAs that read codons beginning with adenine. Is involved in the transfer of the threonylcarbamoyl moiety of threonylcarbamoyl-AMP (TC-AMP) to the N6 group of A37, together with TsaE and TsaB. TsaD likely plays a direct catalytic role in this reaction. The sequence is that of tRNA N6-adenosine threonylcarbamoyltransferase from Xylella fastidiosa (strain M23).